The sequence spans 447 residues: Elongation factor 1-alpha (447 aa).

Residues 5 to 230 form the tr-type G domain; that stretch reads KIHISIVVIG…DQISEPKRPS (226 aa). Positions 14–21 are G1; sequence GHVDSGKS. Residue 14–21 participates in GTP binding; the sequence is GHVDSGKS. N6,N6-dimethyllysine is present on Lys-55. The segment at 70 to 74 is G2; sequence GITID. Position 79 is an N6,N6,N6-trimethyllysine (Lys-79). Residues 91–94 are G3; sequence DAPG. Residues 91 to 95 and 153 to 156 contribute to the GTP site; these read DAPGH and NKMD. A G4 region spans residues 153–156; the sequence is NKMD. Lys-187 is subject to N6,N6,N6-trimethyllysine. A G5 region spans residues 194-196; sequence SGF. Lys-261 bears the N6-methyllysine mark. The residue at position 289 (Glu-289) is a 5-glutamyl glycerylphosphorylethanolamine. Residue Lys-306 is modified to N6,N6,N6-trimethyllysine. A 5-glutamyl glycerylphosphorylethanolamine modification is found at Glu-362. Lys-396 is subject to N6,N6,N6-trimethyllysine.

This sequence belongs to the TRAFAC class translation factor GTPase superfamily. Classic translation factor GTPase family. EF-Tu/EF-1A subfamily.

The protein localises to the cytoplasm. This protein promotes the GTP-dependent binding of aminoacyl-tRNA to the A-site of ribosomes during protein biosynthesis. This Daucus carota (Wild carrot) protein is Elongation factor 1-alpha.